The chain runs to 187 residues: Resolvase OPG149 (187 aa).

Belongs to the RuvC family. Poxviruses-type subfamily. Requires Mg(2+) as cofactor.

Plays a role in DNA replication by cleaving viral DNA concatamers to yield unit-length viral genomes. The concatamer junctions contain inverted repeat sequences that can be extruded as cruciforms, yielding Holliday junctions that A22 protein cleaves. The polypeptide is Resolvase OPG149 (OPG149) (Variola virus (isolate Human/India/Ind3/1967) (VARV)).